The sequence spans 576 residues: MAGUK p55 subfamily member 7 (576 aa).

L27 domains are found at residues 10–64 (SEMG…EDCA) and 65–122 (PTPV…YDPE). The PDZ domain maps to 139–220 (IIRLVKNKEP…AITFKVVPGI (82 aa)). The SH3 domain occupies 228-298 (EPKMFIKALF…PSKHFQERRL (71 aa)). Residues 368-560 (HRLVVLVGPT…AFSELKQALK (193 aa)) enclose the Guanylate kinase-like domain.

This sequence belongs to the MAGUK family.

Its subcellular location is the membrane. The protein localises to the cell junction. It localises to the tight junction. The protein resides in the adherens junction. Its function is as follows. Acts as an important adapter that promotes epithelial cell polarity and tight junction formation. Involved in the assembly of protein complexes at sites of cell-cell contact. The protein is MAGUK p55 subfamily member 7 (mpp7) of Danio rerio (Zebrafish).